The sequence spans 307 residues: Aspartate carbamoyltransferase catalytic subunit (307 aa).

Carbamoyl phosphate contacts are provided by Arg54 and Thr55. Lys83 contacts L-aspartate. Carbamoyl phosphate contacts are provided by Arg104, His132, and Gln135. Positions 165 and 228 each coordinate L-aspartate. Carbamoyl phosphate-binding residues include Leu267 and Pro268.

It belongs to the aspartate/ornithine carbamoyltransferase superfamily. ATCase family. Heterododecamer (2C3:3R2) of six catalytic PyrB chains organized as two trimers (C3), and six regulatory PyrI chains organized as three dimers (R2).

The catalysed reaction is carbamoyl phosphate + L-aspartate = N-carbamoyl-L-aspartate + phosphate + H(+). The protein operates within pyrimidine metabolism; UMP biosynthesis via de novo pathway; (S)-dihydroorotate from bicarbonate: step 2/3. Its function is as follows. Catalyzes the condensation of carbamoyl phosphate and aspartate to form carbamoyl aspartate and inorganic phosphate, the committed step in the de novo pyrimidine nucleotide biosynthesis pathway. This is Aspartate carbamoyltransferase catalytic subunit from Clostridium perfringens (strain ATCC 13124 / DSM 756 / JCM 1290 / NCIMB 6125 / NCTC 8237 / Type A).